The sequence spans 297 residues: UDP-N-acetylenolpyruvoylglucosamine reductase (297 aa).

The region spanning 24–189 (KVGGNAEIFF…LKAIFKVNKG (166 aa)) is the FAD-binding PCMH-type domain. The active site involves Arg-169. The active-site Proton donor is the Ser-218. Glu-289 is a catalytic residue.

Belongs to the MurB family. It depends on FAD as a cofactor.

It localises to the cytoplasm. It carries out the reaction UDP-N-acetyl-alpha-D-muramate + NADP(+) = UDP-N-acetyl-3-O-(1-carboxyvinyl)-alpha-D-glucosamine + NADPH + H(+). It functions in the pathway cell wall biogenesis; peptidoglycan biosynthesis. Its function is as follows. Cell wall formation. The polypeptide is UDP-N-acetylenolpyruvoylglucosamine reductase (Rickettsia canadensis (strain McKiel)).